We begin with the raw amino-acid sequence, 74 residues long: Acyl carrier protein (74 aa).

The Carrier domain occupies 1 to 73 (MAVFEKVQEI…DLVAYVEEQA (73 aa)). The residue at position 35 (Ser-35) is an O-(pantetheine 4'-phosphoryl)serine.

It belongs to the acyl carrier protein (ACP) family. In terms of processing, 4'-phosphopantetheine is transferred from CoA to a specific serine of apo-ACP by AcpS. This modification is essential for activity because fatty acids are bound in thioester linkage to the sulfhydryl of the prosthetic group.

It localises to the cytoplasm. It participates in lipid metabolism; fatty acid biosynthesis. In terms of biological role, carrier of the growing fatty acid chain in fatty acid biosynthesis. The sequence is that of Acyl carrier protein from Streptococcus pneumoniae serotype 4 (strain ATCC BAA-334 / TIGR4).